Here is a 101-residue protein sequence, read N- to C-terminus: Putative pterin-4-alpha-carbinolamine dehydratase (101 aa).

It belongs to the pterin-4-alpha-carbinolamine dehydratase family.

The enzyme catalyses (4aS,6R)-4a-hydroxy-L-erythro-5,6,7,8-tetrahydrobiopterin = (6R)-L-erythro-6,7-dihydrobiopterin + H2O. The polypeptide is Putative pterin-4-alpha-carbinolamine dehydratase (phhB) (Ralstonia nicotianae (strain ATCC BAA-1114 / GMI1000) (Ralstonia solanacearum)).